The primary structure comprises 123 residues: Small ribosomal subunit protein uS12 (123 aa).

Position 89 is a 3-methylthioaspartic acid (Asp89).

This sequence belongs to the universal ribosomal protein uS12 family. Part of the 30S ribosomal subunit. Contacts proteins S8 and S17. May interact with IF1 in the 30S initiation complex.

In terms of biological role, with S4 and S5 plays an important role in translational accuracy. Interacts with and stabilizes bases of the 16S rRNA that are involved in tRNA selection in the A site and with the mRNA backbone. Located at the interface of the 30S and 50S subunits, it traverses the body of the 30S subunit contacting proteins on the other side and probably holding the rRNA structure together. The combined cluster of proteins S8, S12 and S17 appears to hold together the shoulder and platform of the 30S subunit. This is Small ribosomal subunit protein uS12 from Trichlorobacter lovleyi (strain ATCC BAA-1151 / DSM 17278 / SZ) (Geobacter lovleyi).